Here is an 89-residue protein sequence, read N- to C-terminus: FXYD domain-containing ion transport regulator 4 (89 aa).

The signal sequence occupies residues 1–20; that stretch reads MERVTLALLLLAGLTALEAN. The Extracellular segment spans residues 21–38; the sequence is DPFANKDDPFYYDWKNLQ. The chain crosses the membrane as a helical span at residues 39–59; it reads LSGLICGGLLAIAGIAAVLSG. Over 60–89 the chain is Cytoplasmic; sequence KCKCKSSQKQHSPVPEKAIPLITPGSATTC.

This sequence belongs to the FXYD family. Regulatory subunit of the sodium/potassium-transporting ATPase which is composed of a catalytic alpha subunit, a non-catalytic beta subunit and a regulatory subunit. The regulatory subunit, a member of the FXYD protein family, modulates the enzymatic activity in a tissue- and isoform-specific way by changing affinities of the Na+/K+-ATPase toward Na(+), K(+) or ATP.

The protein resides in the cell membrane. It is found in the basolateral cell membrane. Functionally, associates with and regulates the activity of the sodium/potassium-transporting ATPase (NKA) which catalyzes the hydrolysis of ATP coupled with the exchange of Na(+) and K(+) ions across the plasma membrane. Increases the apparent affinity of the transporter for Na(+) and increases NKA activity. This chain is FXYD domain-containing ion transport regulator 4 (FXYD4), found in Homo sapiens (Human).